We begin with the raw amino-acid sequence, 264 residues long: Methionine aminopeptidase (264 aa).

Histidine 79 provides a ligand contact to substrate. A divalent metal cation-binding residues include aspartate 97, aspartate 108, and histidine 171. Substrate is bound at residue histidine 178. Positions 204 and 235 each coordinate a divalent metal cation.

Belongs to the peptidase M24A family. Methionine aminopeptidase type 1 subfamily. In terms of assembly, monomer. Co(2+) serves as cofactor. The cofactor is Zn(2+). Mn(2+) is required as a cofactor. Requires Fe(2+) as cofactor.

It carries out the reaction Release of N-terminal amino acids, preferentially methionine, from peptides and arylamides.. Removes the N-terminal methionine from nascent proteins. The N-terminal methionine is often cleaved when the second residue in the primary sequence is small and uncharged (Met-Ala-, Cys, Gly, Pro, Ser, Thr, or Val). Requires deformylation of the N(alpha)-formylated initiator methionine before it can be hydrolyzed. This chain is Methionine aminopeptidase, found in Escherichia coli O157:H7.